The following is a 138-amino-acid chain: Cysteine desulfuration protein SufE (138 aa).

The active-site Cysteine persulfide intermediate is cysteine 51.

Belongs to the SufE family. Homodimer. Interacts with SufS.

Its subcellular location is the cytoplasm. Its pathway is cofactor biosynthesis; iron-sulfur cluster biosynthesis. Its function is as follows. Participates in cysteine desulfuration mediated by SufS. Cysteine desulfuration mobilizes sulfur from L-cysteine to yield L-alanine and constitutes an essential step in sulfur metabolism for biosynthesis of a variety of sulfur-containing biomolecules. Functions as a sulfur acceptor for SufS, by mediating the direct transfer of the sulfur atom from the S-sulfanylcysteine of SufS, an intermediate product of cysteine desulfuration process. The sequence is that of Cysteine desulfuration protein SufE from Sodalis glossinidius (strain morsitans).